The primary structure comprises 305 residues: MSKKLTFQEIILTLQQYWNDQGCMLMQAYDNEKGAGTMSPYTFLRAIGPEPWNAAYVEPSRRPADGRYGENPNRLYQHHQFQVVMKPSPSNIQELYLASLEKLGINPLEHDIRFVEDNWENPSTGSAGLGWEVWLDGMEITQFTYFQQVGGLATSPVTAEVTYGLERLASYIQEVDSVYDIEWAPGVKYGEIFLQPEYEHSKYSFEISDQDMLLENFEKFEKEASRALEEGLVHPAYDYVLKCSHTFNLLDARGAVSVTERAGYIARIRNLARVVAKTFVAERKKLGLPLLDEATRAILLAEDDE.

It belongs to the class-II aminoacyl-tRNA synthetase family. As to quaternary structure, tetramer of two alpha and two beta subunits.

The protein resides in the cytoplasm. The enzyme catalyses tRNA(Gly) + glycine + ATP = glycyl-tRNA(Gly) + AMP + diphosphate. The protein is Glycine--tRNA ligase alpha subunit of Streptococcus pyogenes serotype M12 (strain MGAS2096).